A 462-amino-acid polypeptide reads, in one-letter code: Kinetochore protein Nuf2-A (462 aa).

2 coiled-coil regions span residues 143–277 (SSYK…DKCD) and 308–461 (EIHR…RLSR). Residues 239 to 259 (RMKSQIVESPEQRKSKTERMK) form a disordered region. The segment covering 248–259 (PEQRKSKTERMK) has biased composition (basic and acidic residues).

The protein belongs to the NUF2 family. In terms of assembly, component of the NDC80 complex, which is composed of ndc80, cdca1, spbc24 and spbc25. The NDC80 complex interacts with mis12 and zwint.

The protein resides in the nucleus. The protein localises to the chromosome. Its subcellular location is the centromere. It is found in the kinetochore. Acts as a component of the essential kinetochore-associated NDC80 complex, which is required for chromosome segregation and spindle checkpoint activity. Required for kinetochore integrity and the organization of stable microtubule binding sites in the outer plate of the kinetochore. The NDC80 complex synergistically enhances the affinity of the SKA1 complex for microtubules and may allow the NDC80 complex to track depolymerizing microtubules. The polypeptide is Kinetochore protein Nuf2-A (nuf2-a) (Xenopus laevis (African clawed frog)).